A 138-amino-acid chain; its full sequence is Transcription antitermination protein NusB (138 aa).

Belongs to the NusB family.

Involved in transcription antitermination. Required for transcription of ribosomal RNA (rRNA) genes. Binds specifically to the boxA antiterminator sequence of the ribosomal RNA (rrn) operons. This is Transcription antitermination protein NusB from Yersinia enterocolitica serotype O:8 / biotype 1B (strain NCTC 13174 / 8081).